The primary structure comprises 286 residues: MTALTESSTSKFVKINEKGFSDFNIHYNEAGNGETVIMLHGGGPGAGGWSNYYRNVGPFVDAGYRVILKDSPGFNKSDAVVMDEQRGLVNARAVKGLMDALGIDRAHLVGNSMGGATALNFAIEYPERIGKLILMGPGGPGPSMFAPMPMEGIKLLFKLYAEPSYENLKQMIQVFLYDQSLITEELLQGRWEAIQRQPEHLKNFLISAQKAPLSTWDVTARLGEIKAKTFITWGRDDRFVPLDHGLKLLWNIDDARLHVFSKCGHWAQWEHADEFNRLAIDFLRQA.

The 236-residue stretch at 36–271 (VIMLHGGGPG…KCGHWAQWEH (236 aa)) folds into the AB hydrolase-1 domain. Residues 42–43 (GG), Asn-51, Asn-111, Ser-180, and Arg-190 each bind substrate. His-265 functions as the Proton acceptor in the catalytic mechanism. Residue Trp-266 coordinates substrate.

Belongs to the AB hydrolase superfamily. BphD family. In terms of assembly, homodimer.

The catalysed reaction is 2,6-dioxo-6-phenylhexa-3-enoate + H2O = 2-oxopent-4-enoate + benzoate + H(+). It functions in the pathway xenobiotic degradation; biphenyl degradation; 2-hydroxy-2,4-pentadienoate and benzoate from biphenyl: step 4/4. Its function is as follows. Catalyzes an unusual C-C bond hydrolysis of 2-hydroxy-6-oxo-6-phenylhexa-2,4-dienoic acid (HOPDA) to produce benzoic acid and 2-hydroxy-2,4-pentadienoic acid (HPD). This is 2-hydroxy-6-oxo-6-phenylhexa-2,4-dienoate hydrolase (bphD) from Metapseudomonas furukawaii (Pseudomonas furukawaii).